Reading from the N-terminus, the 457-residue chain is MNNLAAVILAAGKGTRMKSNIVKVMHPLGGLPMVSWPVNTAREAGASNIVLVTGHQSEKVQDFFEGQSDVRFAVQEEQLGTGHAVACALPALLGFSGMVLILCGDVPLISTATLKAMVKQHRSRHAVITVLTADFAQPNGYGRIVKDGDGFIKRIVEEKDATDAERRITEINSGIYCVESDFLTVAIPNLKNDNAQREYYLTDIIKEAANLGLLCQAFPVADPAEVMGINDRAQLAEAGQLLRGRINKALMLDGTTLIDPQTTYIDRGVRIGKDTTIHPNVHISGDTEIGNNCLIEPSVVIKGCKIGNGVTIKAGSVMMDAVIHDDVAIGPMAHLRPGTELKEHVKIGNFVETKKIVMGEGSKASHLTYLGDAAIGTNVNIGCGTITCNYDGVKKHRTVIGDDVFVGSDVQFVAPVTIGRNSLIAAGTTVTRDVPPDSLAIARAPQVNKEGWKLKKK.

Residues 1–232 (MNNLAAVILA…PAEVMGINDR (232 aa)) form a pyrophosphorylase region. Residues 9-12 (LAAG), lysine 23, glutamine 75, and 80-81 (GT) contribute to the UDP-N-acetyl-alpha-D-glucosamine site. Residue aspartate 105 coordinates Mg(2+). UDP-N-acetyl-alpha-D-glucosamine-binding residues include glycine 142, glutamate 157, asparagine 172, and asparagine 230. A Mg(2+)-binding site is contributed by asparagine 230. Residues 233–253 (AQLAEAGQLLRGRINKALMLD) form a linker region. Residues 254–457 (GTTLIDPQTT…NKEGWKLKKK (204 aa)) form an N-acetyltransferase region. Residues arginine 336 and lysine 354 each contribute to the UDP-N-acetyl-alpha-D-glucosamine site. Histidine 366 serves as the catalytic Proton acceptor. Residues tyrosine 369 and asparagine 380 each coordinate UDP-N-acetyl-alpha-D-glucosamine. Acetyl-CoA-binding positions include 389–390 (NY), serine 408, alanine 426, and arginine 443.

In the N-terminal section; belongs to the N-acetylglucosamine-1-phosphate uridyltransferase family. The protein in the C-terminal section; belongs to the transferase hexapeptide repeat family. In terms of assembly, homotrimer. It depends on Mg(2+) as a cofactor.

Its subcellular location is the cytoplasm. The enzyme catalyses alpha-D-glucosamine 1-phosphate + acetyl-CoA = N-acetyl-alpha-D-glucosamine 1-phosphate + CoA + H(+). It catalyses the reaction N-acetyl-alpha-D-glucosamine 1-phosphate + UTP + H(+) = UDP-N-acetyl-alpha-D-glucosamine + diphosphate. It participates in nucleotide-sugar biosynthesis; UDP-N-acetyl-alpha-D-glucosamine biosynthesis; N-acetyl-alpha-D-glucosamine 1-phosphate from alpha-D-glucosamine 6-phosphate (route II): step 2/2. Its pathway is nucleotide-sugar biosynthesis; UDP-N-acetyl-alpha-D-glucosamine biosynthesis; UDP-N-acetyl-alpha-D-glucosamine from N-acetyl-alpha-D-glucosamine 1-phosphate: step 1/1. It functions in the pathway bacterial outer membrane biogenesis; LPS lipid A biosynthesis. Catalyzes the last two sequential reactions in the de novo biosynthetic pathway for UDP-N-acetylglucosamine (UDP-GlcNAc). The C-terminal domain catalyzes the transfer of acetyl group from acetyl coenzyme A to glucosamine-1-phosphate (GlcN-1-P) to produce N-acetylglucosamine-1-phosphate (GlcNAc-1-P), which is converted into UDP-GlcNAc by the transfer of uridine 5-monophosphate (from uridine 5-triphosphate), a reaction catalyzed by the N-terminal domain. This Geotalea uraniireducens (strain Rf4) (Geobacter uraniireducens) protein is Bifunctional protein GlmU.